Reading from the N-terminus, the 240-residue chain is Pyridoxine 5'-phosphate synthase (240 aa).

N6 serves as a coordination point for 3-amino-2-oxopropyl phosphate. 8 to 9 (DH) provides a ligand contact to 1-deoxy-D-xylulose 5-phosphate. R17 is a 3-amino-2-oxopropyl phosphate binding site. Residue H42 is the Proton acceptor of the active site. Residues R44 and H49 each coordinate 1-deoxy-D-xylulose 5-phosphate. Residue E69 is the Proton acceptor of the active site. A 1-deoxy-D-xylulose 5-phosphate-binding site is contributed by T99. The active-site Proton donor is H193. Residues G194 and 216–217 (GH) contribute to the 3-amino-2-oxopropyl phosphate site.

Belongs to the PNP synthase family. Homooctamer; tetramer of dimers.

Its subcellular location is the cytoplasm. It carries out the reaction 3-amino-2-oxopropyl phosphate + 1-deoxy-D-xylulose 5-phosphate = pyridoxine 5'-phosphate + phosphate + 2 H2O + H(+). It functions in the pathway cofactor biosynthesis; pyridoxine 5'-phosphate biosynthesis; pyridoxine 5'-phosphate from D-erythrose 4-phosphate: step 5/5. Catalyzes the complicated ring closure reaction between the two acyclic compounds 1-deoxy-D-xylulose-5-phosphate (DXP) and 3-amino-2-oxopropyl phosphate (1-amino-acetone-3-phosphate or AAP) to form pyridoxine 5'-phosphate (PNP) and inorganic phosphate. This chain is Pyridoxine 5'-phosphate synthase, found in Hydrogenobaculum sp. (strain Y04AAS1).